The chain runs to 431 residues: Enolase (431 aa).

Q166 contacts (2R)-2-phosphoglycerate. E208 serves as the catalytic Proton donor. 3 residues coordinate Mg(2+): D245, E288, and D315. (2R)-2-phosphoglycerate-binding residues include K340, R369, S370, and K391. K340 functions as the Proton acceptor in the catalytic mechanism.

The protein belongs to the enolase family. Mg(2+) serves as cofactor.

It is found in the cytoplasm. The protein localises to the secreted. The protein resides in the cell surface. The enzyme catalyses (2R)-2-phosphoglycerate = phosphoenolpyruvate + H2O. Its pathway is carbohydrate degradation; glycolysis; pyruvate from D-glyceraldehyde 3-phosphate: step 4/5. Its function is as follows. Catalyzes the reversible conversion of 2-phosphoglycerate (2-PG) into phosphoenolpyruvate (PEP). It is essential for the degradation of carbohydrates via glycolysis. This is Enolase from Clostridium botulinum (strain Loch Maree / Type A3).